Here is a 264-residue protein sequence, read N- to C-terminus: Na(+)-translocating NADH-quinone reductase subunit E (264 aa).

6 consecutive transmembrane segments (helical) span residues 11-31 (VFGI…NFLG), 50-70 (MSVA…HTFI), 90-110 (FLEL…LELL), 123-143 (GIFL…LFGI), 149-169 (FIPM…AIVL), and 189-209 (MGIS…LTGI).

Belongs to the NqrDE/RnfAE family. As to quaternary structure, composed of six subunits; NqrA, NqrB, NqrC, NqrD, NqrE and NqrF.

It is found in the cell inner membrane. It carries out the reaction a ubiquinone + n Na(+)(in) + NADH + H(+) = a ubiquinol + n Na(+)(out) + NAD(+). Functionally, NQR complex catalyzes the reduction of ubiquinone-1 to ubiquinol by two successive reactions, coupled with the transport of Na(+) ions from the cytoplasm to the periplasm. NqrA to NqrE are probably involved in the second step, the conversion of ubisemiquinone to ubiquinol. This chain is Na(+)-translocating NADH-quinone reductase subunit E, found in Chlamydia caviae (strain ATCC VR-813 / DSM 19441 / 03DC25 / GPIC) (Chlamydophila caviae).